The primary structure comprises 443 residues: Exodeoxyribonuclease 7 large subunit (443 aa).

It belongs to the XseA family. Heterooligomer composed of large and small subunits.

The protein localises to the cytoplasm. The enzyme catalyses Exonucleolytic cleavage in either 5'- to 3'- or 3'- to 5'-direction to yield nucleoside 5'-phosphates.. Bidirectionally degrades single-stranded DNA into large acid-insoluble oligonucleotides, which are then degraded further into small acid-soluble oligonucleotides. The polypeptide is Exodeoxyribonuclease 7 large subunit (Vibrio parahaemolyticus serotype O3:K6 (strain RIMD 2210633)).